The sequence spans 298 residues: 4-diphosphocytidyl-2-C-methyl-D-erythritol kinase (298 aa).

The active site involves lysine 11. ATP is bound at residue 94 to 104; that stretch reads PMGGGLGGGSS. Aspartate 136 is a catalytic residue.

The protein belongs to the GHMP kinase family. IspE subfamily.

The catalysed reaction is 4-CDP-2-C-methyl-D-erythritol + ATP = 4-CDP-2-C-methyl-D-erythritol 2-phosphate + ADP + H(+). The protein operates within isoprenoid biosynthesis; isopentenyl diphosphate biosynthesis via DXP pathway; isopentenyl diphosphate from 1-deoxy-D-xylulose 5-phosphate: step 3/6. Functionally, catalyzes the phosphorylation of the position 2 hydroxy group of 4-diphosphocytidyl-2C-methyl-D-erythritol. In Chromohalobacter salexigens (strain ATCC BAA-138 / DSM 3043 / CIP 106854 / NCIMB 13768 / 1H11), this protein is 4-diphosphocytidyl-2-C-methyl-D-erythritol kinase.